The chain runs to 154 residues: MRCPFCGNDDTQVKDSRPTEDNSAIRRRRFCPACGARFTTFERVQLRELTVVKSGGSREPFDREKLLRSMRIALRKRPVDADRIDRVVNSIVRQLESSGETEIPSSQIGEMVMVHLGTLDKVAYVRYASVYKDFREVTDFNQFVETLRTDAPAG.

Residues 1-22 (MRCPFCGNDDTQVKDSRPTEDN) are disordered. A zinc finger spans residues 3–34 (CPFCGNDDTQVKDSRPTEDNSAIRRRRFCPAC). A compositionally biased stretch (basic and acidic residues) spans 11–22 (TQVKDSRPTEDN). Residues 49-139 (LTVVKSGGSR…VYKDFREVTD (91 aa)) form the ATP-cone domain.

This sequence belongs to the NrdR family. It depends on Zn(2+) as a cofactor.

In terms of biological role, negatively regulates transcription of bacterial ribonucleotide reductase nrd genes and operons by binding to NrdR-boxes. This is Transcriptional repressor NrdR from Rhodospirillum centenum (strain ATCC 51521 / SW).